The following is a 423-amino-acid chain: Protein CLP1 homolog (423 aa).

Residues glutamate 16, lysine 57, and 119–124 (DVGKST) each bind ATP.

Belongs to the Clp1 family. Clp1 subfamily.

It is found in the nucleus. In terms of biological role, required for endonucleolytic cleavage during polyadenylation-dependent pre-mRNA 3'-end formation. The sequence is that of Protein CLP1 homolog (cbc) from Drosophila yakuba (Fruit fly).